Here is a 125-residue protein sequence, read N- to C-terminus: uncharacterized protein (125 aa).

Residues lysine 21–serine 43 traverse the membrane as a helical segment.

It localises to the membrane. This is an uncharacterized protein from Archaeoglobus fulgidus (strain ATCC 49558 / DSM 4304 / JCM 9628 / NBRC 100126 / VC-16).